The primary structure comprises 96 residues: MSAVSTCADGLVLRLYIQPKASRDSIVGLHGDELKVAITAPPVDGQANAHLTKYLAKQFRVAKSQVIIEKGELGRHKQVKILNPQNIPTEVAALTE.

This sequence belongs to the UPF0235 family.

The protein is UPF0235 protein Ent638_3359 of Enterobacter sp. (strain 638).